Consider the following 418-residue polypeptide: CinA-like protein (418 aa).

It belongs to the CinA family.

The protein is CinA-like protein of Leptospira interrogans serogroup Icterohaemorrhagiae serovar Lai (strain 56601).